A 301-amino-acid polypeptide reads, in one-letter code: Syntaxin-17 (301 aa).

At Ser2 the chain carries N-acetylserine. Residues 2–227 lie on the Cytoplasmic side of the membrane; the sequence is SEDEEKVKLR…KNLQKAAKYK (226 aa). Lys41 bears the N6-acetyllysine mark. Residues 49–128 adopt a coiled-coil conformation; it reads DKLHEEHINA…QVKNEEALLQ (80 aa). A Phosphotyrosine; by ABL1 modification is found at Tyr156. Residues 161-223 enclose the t-SNARE coiled-coil homology domain; the sequence is IPRDQNAAES…EEGTKNLQKA (63 aa). A helical membrane pass occupies residues 228–248; it reads LAALPVAGAVIGGVVGGPIGL. A necessary and sufficient for localization to autophagosome region spans residues 228–274; it reads LAALPVAGAVIGGVVGGPIGLLAGFKVAGIAAALGGGVLGFTGGKLI. Residues 249-253 are Lumenal-facing; it reads LAGFK. Residues 254–274 form a helical membrane-spanning segment; that stretch reads VAGIAAALGGGVLGFTGGKLI. A required for interaction with COPB1, TMED9 and TMED10 region spans residues 273–301; it reads LIQRRKQKMMEKLTSSCPDLPSQSDKKCS. Over 275–301 the chain is Cytoplasmic; that stretch reads QRRKQKMMEKLTSSCPDLPSQSDKKCS. A Phosphoserine modification is found at Ser288. The short motif at 298–301 is the Endoplasmic reticulum retention signal element; the sequence is KKCS.

Belongs to the syntaxin family. In terms of assembly, forms a SNARE complex composed of VAMP8, SNAP29 and STX17 involved in fusion of autophagosome with lysosome. May interact with VAMP7. May interact with VTI1B. Probably interacts with BET1, SCFD1 and SEC22B. Interacts with PTPN2 and ABL1; involved in STX17 phosphorylation. Interacts with COPB1. Interacts with TMED9 and TMED10; the interaction is direct. Interacts with RUBCNL/PACER; promoting targeting of RUBCNL/PACER to autophagosome. Interacts with VAMP8, SNAP29, VPS39 and VPS41; these interactions are increased in the absence of TMEM39A. Interacts with IRGM; promoting STX17 recruitment to autophagosomes. Interacts with ATG8 proteins GABARAP and MAP1LC3B. Interacts with RNF115; this interaction enhances STX17 stability which in turn promotes autophagosome maturation. Interacts with RAB39A (GTP-bound); the interaction promotes autophagosome-lysosome membrane fusion driven by STX17-SNAP29-VAMP8. Interacts with RAB39B; the interaction may promote a different fonction in autophagy as compared with RAB39A. In terms of processing, phosphorylated at Tyr-156 probably by ABL1. Dephosphorylation by PTPN2; regulates exit from the endoplasmic reticulum. As to expression, detected in all tissues examined with higher expression in steroidogenic tissues including testis and adrenal gland (at protein level). Highly expressed in liver and testis. Also found in brain, heart, kidney, lung, placenta, skeletal muscle and spleen.

The protein localises to the endoplasmic reticulum membrane. It is found in the smooth endoplasmic reticulum membrane. It localises to the endoplasmic reticulum-Golgi intermediate compartment membrane. The protein resides in the cytoplasmic vesicle. Its subcellular location is the autophagosome membrane. The protein localises to the COPII-coated vesicle membrane. It is found in the cytoplasm. It localises to the cytosol. The protein resides in the mitochondrion membrane. Its subcellular location is the autolysosome membrane. SNAREs, soluble N-ethylmaleimide-sensitive factor-attachment protein receptors, are essential proteins for fusion of cellular membranes. SNAREs localized on opposing membranes assemble to form a trans-SNARE complex, an extended, parallel four alpha-helical bundle that drives membrane fusion. STX17 is a SNARE of the autophagosome involved in autophagy through the direct control of autophagosome membrane fusion with the lysosome membrane. May also play a role in the early secretory pathway where it may maintain the architecture of the endoplasmic reticulum-Golgi intermediate compartment/ERGIC and Golgi and/or regulate transport between the endoplasmic reticulum, the ERGIC and the Golgi. This Rattus norvegicus (Rat) protein is Syntaxin-17.